The primary structure comprises 175 residues: Peptide deformylase (175 aa).

Positions 96 and 138 each coordinate Fe cation. Residue Glu139 is part of the active site. Fe cation is bound at residue His142.

It belongs to the polypeptide deformylase family. The cofactor is Fe(2+).

It carries out the reaction N-terminal N-formyl-L-methionyl-[peptide] + H2O = N-terminal L-methionyl-[peptide] + formate. Functionally, removes the formyl group from the N-terminal Met of newly synthesized proteins. Requires at least a dipeptide for an efficient rate of reaction. N-terminal L-methionine is a prerequisite for activity but the enzyme has broad specificity at other positions. The sequence is that of Peptide deformylase from Helicobacter pylori (strain Shi470).